The sequence spans 650 residues: Tudor domain-containing protein 3 (650 aa).

Positions 147–169 (TKTFGGGGNAGSNLNPGAGGSRN) are disordered. The 41-residue stretch at 192 to 232 (LVDEKALRHITEMGFCKDAARQALMDHSNNVEAALNFLLTG) folds into the UBA domain. Disordered regions lie at residues 233–271 (SKPK…APST), 286–406 (EDNK…SCNN), and 427–447 (HQNS…DQRY). Composition is skewed to basic and acidic residues over residues 320–337 (TRND…RFQK) and 366–388 (HWME…KDFS). Residues 390-406 (PPSNHQNEGSYRKSCNN) are compositionally biased toward polar residues. The Tudor domain maps to 554-614 (SWRSGDECLA…RPIQAEAWEE (61 aa)). The segment at 616-650 (GEFGDSLDFRRGGDGQPRRSTRPTQQFYQPPRARN) is disordered. A compositionally biased stretch (basic and acidic residues) spans 622–632 (LDFRRGGDGQP).

As to quaternary structure, component of mRNA stress granules.

Its subcellular location is the cytoplasm. It is found in the nucleus. In terms of biological role, scaffolding protein that specifically recognizes and binds dimethylarginine-containing proteins. Plays a role in the regulation of translation of target mRNAs by binding Arg/Gly-rich motifs (GAR) in dimethylarginine-containing proteins. In nucleus, acts as a coactivator: recognizes and binds asymmetric dimethylation on the core histone tails associated with transcriptional activation (H3R17me2a and H4R3me2a) and recruits proteins at these arginine-methylated loci. In cytoplasm, acts as an antiviral factor that participates in the assembly of stress granules together with G3BP1. The chain is Tudor domain-containing protein 3 (tdrd3) from Xenopus laevis (African clawed frog).